A 264-amino-acid polypeptide reads, in one-letter code: uncharacterized protein (264 aa).

A helical membrane pass occupies residues 7–27 (LTLGICLVLLIILIVGYVIMT).

The protein belongs to the staphylococcal tandem lipoprotein family.

The protein resides in the cell membrane. This is an uncharacterized protein from Staphylococcus aureus (strain N315).